The following is a 111-amino-acid chain: Ribonuclease P protein component (111 aa).

This sequence belongs to the RnpA family. In terms of assembly, consists of a catalytic RNA component (M1 or rnpB) and a protein subunit.

It catalyses the reaction Endonucleolytic cleavage of RNA, removing 5'-extranucleotides from tRNA precursor.. In terms of biological role, RNaseP catalyzes the removal of the 5'-leader sequence from pre-tRNA to produce the mature 5'-terminus. It can also cleave other RNA substrates such as 4.5S RNA. The protein component plays an auxiliary but essential role in vivo by binding to the 5'-leader sequence and broadening the substrate specificity of the ribozyme. This is Ribonuclease P protein component from Streptococcus thermophilus (strain CNRZ 1066).